The chain runs to 410 residues: 2-oxoisovalerate dehydrogenase subunit alpha (410 aa).

Belongs to the BCKDHA family. Heterodimer of an alpha and a beta chain. Thiamine diphosphate is required as a cofactor.

The catalysed reaction is N(6)-[(R)-lipoyl]-L-lysyl-[protein] + 3-methyl-2-oxobutanoate + H(+) = N(6)-[(R)-S(8)-2-methylpropanoyldihydrolipoyl]-L-lysyl-[protein] + CO2. Functionally, the branched-chain alpha-keto dehydrogenase complex catalyzes the overall conversion of alpha-keto acids to acyl-CoA and CO(2). It contains multiple copies of three enzymatic components: branched-chain alpha-keto acid decarboxylase (E1), lipoamide acyltransferase (E2) and lipoamide dehydrogenase (E3). The protein is 2-oxoisovalerate dehydrogenase subunit alpha (bkdA1) of Pseudomonas aeruginosa (strain ATCC 15692 / DSM 22644 / CIP 104116 / JCM 14847 / LMG 12228 / 1C / PRS 101 / PAO1).